The primary structure comprises 340 residues: Glycerol-3-phosphate dehydrogenase [NAD(P)+] (340 aa).

NADPH-binding residues include S13, W14, and K108. K108, G139, and S141 together coordinate sn-glycerol 3-phosphate. Residue A143 participates in NADPH binding. Residues K194, D247, S257, R258, and N259 each contribute to the sn-glycerol 3-phosphate site. The active-site Proton acceptor is K194. R258 serves as a coordination point for NADPH. Positions 282 and 284 each coordinate NADPH.

The protein belongs to the NAD-dependent glycerol-3-phosphate dehydrogenase family.

The protein localises to the cytoplasm. It catalyses the reaction sn-glycerol 3-phosphate + NAD(+) = dihydroxyacetone phosphate + NADH + H(+). The catalysed reaction is sn-glycerol 3-phosphate + NADP(+) = dihydroxyacetone phosphate + NADPH + H(+). It participates in membrane lipid metabolism; glycerophospholipid metabolism. Catalyzes the reduction of the glycolytic intermediate dihydroxyacetone phosphate (DHAP) to sn-glycerol 3-phosphate (G3P), the key precursor for phospholipid synthesis. The chain is Glycerol-3-phosphate dehydrogenase [NAD(P)+] from Streptococcus sanguinis (strain SK36).